The sequence spans 410 residues: Lipoyl synthase, mitochondrial (410 aa).

[4Fe-4S] cluster-binding residues include C134, C139, C145, C165, C169, C172, and S390. Positions 148–379 (AGKSTAATAT…AKIGNDLGFL (232 aa)) constitute a Radical SAM core domain.

It belongs to the radical SAM superfamily. Lipoyl synthase family. The cofactor is [4Fe-4S] cluster.

The protein localises to the mitochondrion. The enzyme catalyses [[Fe-S] cluster scaffold protein carrying a second [4Fe-4S](2+) cluster] + N(6)-octanoyl-L-lysyl-[protein] + 2 oxidized [2Fe-2S]-[ferredoxin] + 2 S-adenosyl-L-methionine + 4 H(+) = [[Fe-S] cluster scaffold protein] + N(6)-[(R)-dihydrolipoyl]-L-lysyl-[protein] + 4 Fe(3+) + 2 hydrogen sulfide + 2 5'-deoxyadenosine + 2 L-methionine + 2 reduced [2Fe-2S]-[ferredoxin]. It functions in the pathway protein modification; protein lipoylation via endogenous pathway; protein N(6)-(lipoyl)lysine from octanoyl-[acyl-carrier-protein]: step 2/2. Catalyzes the radical-mediated insertion of two sulfur atoms into the C-6 and C-8 positions of the octanoyl moiety bound to the lipoyl domains of lipoate-dependent enzymes, thereby converting the octanoylated domains into lipoylated derivatives. The polypeptide is Lipoyl synthase, mitochondrial (Schistosoma mansoni (Blood fluke)).